The primary structure comprises 1007 residues: Serine/threonine-protein kinase PRP4 homolog (1007 aa).

Residues 1–10 (MAAAETQSLR) are compositionally biased toward polar residues. Residues 1 to 99 (MAAAETQSLR…EGMSPAKRTK (99 aa)) form a disordered region. Ala-2 is modified (N-acetylalanine). Residues Ser-8, Ser-20, Ser-23, and Ser-32 each carry the phosphoserine modification. Basic residues-rich tracts occupy residues 39 to 59 (KHSR…KHKH) and 67 to 81 (KKHK…HKRK). A compositionally biased stretch (basic and acidic residues) spans 82–91 (EIIDASDKEG). Ser-87 and Ser-93 each carry phosphoserine. Lys-99 carries the N6-acetyllysine; alternate modification. Lys-99 participates in a covalent cross-link: Glycyl lysine isopeptide (Lys-Gly) (interchain with G-Cter in SUMO2); alternate. Residue Lys-111 forms a Glycyl lysine isopeptide (Lys-Gly) (interchain with G-Cter in SUMO2) linkage. Residue Lys-117 forms a Glycyl lysine isopeptide (Lys-Gly) (interchain with G-Cter in SUMO2); alternate linkage. A Glycyl lysine isopeptide (Lys-Gly) (interchain with G-Cter in SUMO1); alternate cross-link involves residue Lys-117. The residue at position 131 (Ser-131) is a Phosphoserine. At Tyr-140 the chain carries Phosphotyrosine. Disordered regions lie at residues 140-533 (YESG…EEED) and 559-583 (SNMS…SPDD). Ser-142, Ser-144, and Ser-166 each carry phosphoserine. Residues 157-168 (GNRSSTRSSSTK) show a composition bias toward low complexity. Glycyl lysine isopeptide (Lys-Gly) (interchain with G-Cter in SUMO2) cross-links involve residues Lys-170 and Lys-177. 2 stretches are compositionally biased toward basic residues: residues 179–202 (TTKK…KKSK) and 214–230 (RSKS…SKRS). A phosphoserine mark is found at Ser-239, Ser-241, Ser-257, Ser-277, Ser-283, Ser-292, and Ser-294. Residues 247–270 (RSQEKIGKARSPTDDKVKIEDKSK) are compositionally biased toward basic and acidic residues. Basic residues predominate over residues 302 to 315 (SKDRRSRSKERKSK). The span at 316 to 325 (RSETDKEKKP) shows a compositional bias: basic and acidic residues. 5 positions are modified to phosphoserine: Ser-328, Ser-354, Ser-356, Ser-366, and Ser-368. Residues 342–367 (PSRRPGRSPKRRSLSPKPRDKSRRSR) show a composition bias toward basic residues. At Thr-385 the chain carries Phosphothreonine. Ser-387 carries the post-translational modification Phosphoserine. Composition is skewed to basic and acidic residues over residues 395-408 (RSLE…ERRR) and 415-429 (RPRD…RSKD). Residues Ser-427, Ser-431, and Ser-437 each carry the phosphoserine modification. Positions 438–497 (PTRRRSRSPIRRRSRSPLRRSRSPRRRSRSPRRRDRGRRSRSRLRRRSRSRGGRRRRSRS) are enriched in basic residues. Residues Ser-518, Ser-519, Ser-520, Ser-565, Ser-569, Ser-578, and Ser-580 each carry the phosphoserine modification. Acidic residues predominate over residues 518-533 (SSSDDNLEDFDVEEED). Residues 562-581 (SVPSEPSSPQSSTRTRSPSP) show a composition bias toward low complexity. Glycyl lysine isopeptide (Lys-Gly) (interchain with G-Cter in SUMO2) cross-links involve residues Lys-593 and Lys-659. A Protein kinase domain is found at 687–1006 (YNVYGYTGQG…ALQHAFIQEK (320 aa)). ATP is bound by residues 693-701 (TGQGVFSNV) and Lys-717. Lys-717 carries the post-translational modification N6-acetyllysine. Residue Asp-815 is the Proton acceptor of the active site. Tyr-849 carries the post-translational modification Phosphotyrosine. Ser-852 carries the phosphoserine modification.

The protein belongs to the protein kinase superfamily. CMGC Ser/Thr protein kinase family. As to quaternary structure, interacts with CLK1 C-terminus. Associates with the U5 snRNP and NCOR1 deacetylase complexes. Identified in the spliceosome C complex. In terms of processing, phosphorylated by CLK1. Autophosphorylated; phosphorylation inhibits interaction with its targets, such as PRPF6 or SMARCA4. Ubiquitous.

Its subcellular location is the nucleus. It localises to the chromosome. It is found in the centromere. The protein localises to the kinetochore. It carries out the reaction L-seryl-[protein] + ATP = O-phospho-L-seryl-[protein] + ADP + H(+). It catalyses the reaction L-threonyl-[protein] + ATP = O-phospho-L-threonyl-[protein] + ADP + H(+). In terms of biological role, serine/threonine kinase involved in spliceosomal assembly as well as mitosis and signaling regulation. Connects chromatin mediated regulation of transcription and pre-mRNA splicing. During spliceosomal assembly, interacts with and phosphorylates PRPF6 and PRPF31, components of the U4/U6-U5 tri-small nuclear ribonucleoprotein (snRNP), to facilitate the formation of the spliceosome B complex. Plays a role in regulating transcription and the spindle assembly checkpoint (SAC). Associates with U5 snRNP and NCOR1 deacetylase complexes which may allow a coordination of pre-mRNA splicing with chromatin remodeling events involved in transcriptional regulation. Associates and probably phosphorylates SMARCA4 and NCOR1. Phosphorylates SRSF1. Associates with kinetochores during mitosis and is necessary for recruitment and maintenance of the checkpoint proteins such as MAD1L1 and MAD12L1 at the kinetochores. Phosphorylates and regulates the activity of the transcription factors such as ELK1 and KLF13. Phosphorylates nuclear YAP1 and WWTR1/TAZ which induces nuclear exclusion and regulates Hippo signaling pathway, involved in tissue growth control. The polypeptide is Serine/threonine-protein kinase PRP4 homolog (Homo sapiens (Human)).